Reading from the N-terminus, the 558-residue chain is Transcription factor RelB (558 aa).

Over residues 1–11 (MPSRRAARESA) the composition is skewed to basic and acidic residues. Residues 1-21 (MPSRRAARESAPELGALGSSD) form a disordered region. Position 19 is a phosphoserine (serine 19). The leucine-zipper stretch occupies residues 22 to 50 (LSSLSLTVSRTTDELEIIDEYIKENGFGL). Phosphothreonine is present on threonine 84. In terms of domain architecture, RHD spans 103 to 418 (PYLVITEQPK…ESKRRKKKPV (316 aa)). Short sequence motifs (nuclear localization signal) lie at residues 387-391 (KKRKR) and 411-416 (KRRKKK). Residue serine 552 is modified to Phosphoserine.

As to quaternary structure, component of the NF-kappa-B RelB-p50 complex. Component of the NF-kappa-B RelB-p52 complex. Self-associates; the interaction seems to be transient and may prevent degradation allowing for heterodimer formation p50 or p52. Interacts with NFKB1/p50, NFKB2/p52 and NFKB2/p100. Interacts with NFKBID. Interacts with BMAL1 and the interaction is enhanced in the presence of CLOCK. Phosphorylation at 'Thr-103' and 'Ser-573' is followed by proteasomal degradation. Expressed in intestine, thymus and spleen. Undetectable in liver, bome marrow, kidney and testis.

Its subcellular location is the nucleus. The protein localises to the cytoplasm. The protein resides in the cytoskeleton. It localises to the microtubule organizing center. It is found in the centrosome. Functionally, NF-kappa-B is a pleiotropic transcription factor which is present in almost all cell types and is involved in many biological processed such as inflammation, immunity, differentiation, cell growth, tumorigenesis and apoptosis. NF-kappa-B is a homo- or heterodimeric complex formed by the Rel-like domain-containing proteins RELA/p65, RELB, NFKB1/p105, NFKB1/p50, REL and NFKB2/p52. The dimers bind at kappa-B sites in the DNA of their target genes and the individual dimers have distinct preferences for different kappa-B sites that they can bind with distinguishable affinity and specificity. Different dimer combinations act as transcriptional activators or repressors, respectively. NF-kappa-B is controlled by various mechanisms of post-translational modification and subcellular compartmentalization as well as by interactions with other cofactors or corepressors. NF-kappa-B complexes are held in the cytoplasm in an inactive state complexed with members of the NF-kappa-B inhibitor (I-kappa-B) family. In a conventional activation pathway, I-kappa-B is phosphorylated by I-kappa-B kinases (IKKs) in response to different activators, subsequently degraded thus liberating the active NF-kappa-B complex which translocates to the nucleus. NF-kappa-B heterodimeric RelB-p50 and RelB-p52 complexes are transcriptional activators. RELB neither associates with DNA nor with RELA/p65 or REL. Stimulates promoter activity in the presence of NFKB2/p49. As a member of the NUPR1/RELB/IER3 survival pathway, may allow the development of pancreatic intraepithelial neoplasias. Regulates the circadian clock by repressing the transcriptional activator activity of the CLOCK-BMAL1 heterodimer in a CRY1/CRY2 independent manner. Increased repression of the heterodimer is seen in the presence of NFKB2/p52. Is required for both T and B lymphocyte maturation and function. This chain is Transcription factor RelB (Relb), found in Mus musculus (Mouse).